Reading from the N-terminus, the 762-residue chain is Probable inorganic carbon transporter subunit DabA (762 aa).

Zn(2+) contacts are provided by Cys-279, Asp-281, His-461, and Cys-476.

The protein belongs to the inorganic carbon transporter (TC 9.A.2) DabA family. Forms a complex with DabB. It depends on Zn(2+) as a cofactor.

Its subcellular location is the cell inner membrane. Functionally, part of an energy-coupled inorganic carbon pump. This Legionella pneumophila (strain Corby) protein is Probable inorganic carbon transporter subunit DabA.